A 1407-amino-acid polypeptide reads, in one-letter code: DNA-directed RNA polymerase subunit beta' (1407 aa).

Zn(2+) is bound by residues Cys-70, Cys-72, Cys-85, and Cys-88. Residues Asp-460, Asp-462, and Asp-464 each coordinate Mg(2+). 4 residues coordinate Zn(2+): Cys-814, Cys-888, Cys-895, and Cys-898. Position 972 is an N6-acetyllysine (Lys-972).

It belongs to the RNA polymerase beta' chain family. The RNAP catalytic core consists of 2 alpha, 1 beta, 1 beta' and 1 omega subunit. When a sigma factor is associated with the core the holoenzyme is formed, which can initiate transcription. It depends on Mg(2+) as a cofactor. Requires Zn(2+) as cofactor.

It catalyses the reaction RNA(n) + a ribonucleoside 5'-triphosphate = RNA(n+1) + diphosphate. Its function is as follows. DNA-dependent RNA polymerase catalyzes the transcription of DNA into RNA using the four ribonucleoside triphosphates as substrates. In Shigella sonnei (strain Ss046), this protein is DNA-directed RNA polymerase subunit beta'.